Consider the following 361-residue polypeptide: DNA replication and repair protein RecF (361 aa).

30–37 (GPNGSGKT) provides a ligand contact to ATP.

Belongs to the RecF family.

The protein resides in the cytoplasm. In terms of biological role, the RecF protein is involved in DNA metabolism; it is required for DNA replication and normal SOS inducibility. RecF binds preferentially to single-stranded, linear DNA. It also seems to bind ATP. The protein is DNA replication and repair protein RecF of Yersinia pseudotuberculosis serotype IB (strain PB1/+).